The following is a 123-amino-acid chain: Large ribosomal subunit protein eL8 (123 aa).

The protein belongs to the eukaryotic ribosomal protein eL8 family. Part of the 50S ribosomal subunit. Probably part of the RNase P complex.

It localises to the cytoplasm. Multifunctional RNA-binding protein that recognizes the K-turn motif in ribosomal RNA, the RNA component of RNase P, box H/ACA, box C/D and box C'/D' sRNAs. The sequence is that of Large ribosomal subunit protein eL8 from Methanopyrus kandleri (strain AV19 / DSM 6324 / JCM 9639 / NBRC 100938).